Consider the following 452-residue polypeptide: Bifunctional protein GlmU (452 aa).

The pyrophosphorylase stretch occupies residues 1–224 (MNIVILAAGQ…EWEVLGVNSK (224 aa)). UDP-N-acetyl-alpha-D-glucosamine contacts are provided by residues 6–9 (LAAG), K20, Q71, 76–77 (GT), 98–100 (YGD), G134, E149, N164, and N222. D100 serves as a coordination point for Mg(2+). Mg(2+) is bound at residue N222. The segment at 225–245 (VQLAELERQHQLNLAGELLVA) is linker. Residues 246–452 (GVRLADPARI…GWERPKKVKK (207 aa)) form an N-acetyltransferase region. The UDP-N-acetyl-alpha-D-glucosamine site is built by R328 and K346. H358 serves as the catalytic Proton acceptor. UDP-N-acetyl-alpha-D-glucosamine-binding residues include Y361 and N372. Residues A375, 381-382 (NY), S400, A418, and R435 each bind acetyl-CoA.

It in the N-terminal section; belongs to the N-acetylglucosamine-1-phosphate uridyltransferase family. The protein in the C-terminal section; belongs to the transferase hexapeptide repeat family. Homotrimer. Requires Mg(2+) as cofactor.

Its subcellular location is the cytoplasm. The enzyme catalyses alpha-D-glucosamine 1-phosphate + acetyl-CoA = N-acetyl-alpha-D-glucosamine 1-phosphate + CoA + H(+). It carries out the reaction N-acetyl-alpha-D-glucosamine 1-phosphate + UTP + H(+) = UDP-N-acetyl-alpha-D-glucosamine + diphosphate. It functions in the pathway nucleotide-sugar biosynthesis; UDP-N-acetyl-alpha-D-glucosamine biosynthesis; N-acetyl-alpha-D-glucosamine 1-phosphate from alpha-D-glucosamine 6-phosphate (route II): step 2/2. Its pathway is nucleotide-sugar biosynthesis; UDP-N-acetyl-alpha-D-glucosamine biosynthesis; UDP-N-acetyl-alpha-D-glucosamine from N-acetyl-alpha-D-glucosamine 1-phosphate: step 1/1. It participates in bacterial outer membrane biogenesis; LPS lipid A biosynthesis. Catalyzes the last two sequential reactions in the de novo biosynthetic pathway for UDP-N-acetylglucosamine (UDP-GlcNAc). The C-terminal domain catalyzes the transfer of acetyl group from acetyl coenzyme A to glucosamine-1-phosphate (GlcN-1-P) to produce N-acetylglucosamine-1-phosphate (GlcNAc-1-P), which is converted into UDP-GlcNAc by the transfer of uridine 5-monophosphate (from uridine 5-triphosphate), a reaction catalyzed by the N-terminal domain. In Dechloromonas aromatica (strain RCB), this protein is Bifunctional protein GlmU.